The following is a 232-amino-acid chain: Cytidylate kinase (232 aa).

19 to 27 (GPAGVGKTT) is an ATP binding site.

This sequence belongs to the cytidylate kinase family. Type 1 subfamily.

It is found in the cytoplasm. The catalysed reaction is CMP + ATP = CDP + ADP. It catalyses the reaction dCMP + ATP = dCDP + ADP. This Nitratidesulfovibrio vulgaris (strain ATCC 29579 / DSM 644 / CCUG 34227 / NCIMB 8303 / VKM B-1760 / Hildenborough) (Desulfovibrio vulgaris) protein is Cytidylate kinase.